Consider the following 305-residue polypeptide: Lipoyl synthase (305 aa).

The [4Fe-4S] cluster site is built by Cys41, Cys46, Cys52, Cys68, Cys72, Cys75, and Ser281. The Radical SAM core domain maps to Gly54–Lys270. The span at His283–Gln298 shows a compositional bias: basic and acidic residues. Residues His283–Ser305 are disordered.

The protein belongs to the radical SAM superfamily. Lipoyl synthase family. The cofactor is [4Fe-4S] cluster.

The protein localises to the cytoplasm. It carries out the reaction [[Fe-S] cluster scaffold protein carrying a second [4Fe-4S](2+) cluster] + N(6)-octanoyl-L-lysyl-[protein] + 2 oxidized [2Fe-2S]-[ferredoxin] + 2 S-adenosyl-L-methionine + 4 H(+) = [[Fe-S] cluster scaffold protein] + N(6)-[(R)-dihydrolipoyl]-L-lysyl-[protein] + 4 Fe(3+) + 2 hydrogen sulfide + 2 5'-deoxyadenosine + 2 L-methionine + 2 reduced [2Fe-2S]-[ferredoxin]. It participates in protein modification; protein lipoylation via endogenous pathway; protein N(6)-(lipoyl)lysine from octanoyl-[acyl-carrier-protein]. Catalyzes the radical-mediated insertion of two sulfur atoms into the C-6 and C-8 positions of the octanoyl moiety bound to the lipoyl domains of lipoate-dependent enzymes, thereby converting the octanoylated domains into lipoylated derivatives. The polypeptide is Lipoyl synthase (Staphylococcus aureus (strain Mu3 / ATCC 700698)).